The sequence spans 336 residues: Mitochondrial thiamine pyrophosphate carrier 1 (336 aa).

Solcar repeat units lie at residues 11–98, 112–202, and 221–323; these read ISST…VNQV, SSGA…VKDS, and TKGW…SLSI. Transmembrane regions (helical) follow at residues 17-37, 66-86, 118-138, 177-197, 228-244, and 298-315; these read MLCG…LDVV, GVTA…FYGA, FIAG…FDLF, GVSS…ASYG, TAGL…VFPL, and GFLV…ITMY.

Belongs to the mitochondrial carrier (TC 2.A.29) family.

It is found in the mitochondrion inner membrane. Functionally, mitochondrial transporter that mediates uptake of thiamine pyrophosphate (ThPP) into mitochondria. The polypeptide is Mitochondrial thiamine pyrophosphate carrier 1 (TPC1) (Yarrowia lipolytica (strain CLIB 122 / E 150) (Yeast)).